Consider the following 622-residue polypeptide: MALLQISEPGMAPAPHQRRLAVGIDLGTTNSLVAAVRNSIPEALPDDAGRVLLPSVVRYLDKGGRRIGHAAKEEAAIDPRNTIVSVKRFMGRGKAEVEGAANAPYEFVDAPGMVQIRTVDGVKSPVEVSAEILATLRQRAEDTLGDDLVGAVITVPAYFDDAQRQATKDAARLAGLNVLRLLNEPTAAAIAYGLDNGAEGLYAVYDLGGGTFDLSILKLTKGVFEVLAAGGDSALGGDDFDHLLFEHVLAQAGLEVAALAPEDVRLLLDRVRGAKEALSAAPQARVDVKLSTGEKLAQTITRDTFAALVEPLVQRTLGPTRKALRDAQVSAADIKGVVLVGGATRMPVIRDAVAKYFGQPPLVNLDPDQVVALGAAIQADLLAGNRSGGDDWLLLDVIPLSLGVETMGGLVEKIIPRNSTIPVARAQEFTTFKDGQTAMAIHVVQGERELVSDCRSLARFELRGIPPMTAGAARIRVTYQVDADGLLSVFAREQHSGVEASVVVKPSYGLGDDDIARMLEDSFKTAEVDMRARALREAQVEAQRLVEATEAALVADGDLLDASERATVDALVASLRALAPGDDADAIDTATKALAEGTDEFAARRMDKSIKRALAGRKLDEI.

The protein belongs to the heat shock protein 70 family.

Chaperone involved in the maturation of iron-sulfur cluster-containing proteins. Has a low intrinsic ATPase activity which is markedly stimulated by HscB. The polypeptide is Chaperone protein HscA homolog (Burkholderia mallei (strain NCTC 10247)).